Consider the following 428-residue polypeptide: Large envelope protein (428 aa).

Residue Gly2 is the site of N-myristoyl glycine; by host attachment. Residues 2–145 (GNNIKVTFDP…PPLRDTHPHL (144 aa)) are pre-S1. A pre-S region spans residues 2–204 (GNNIKVTFDP…PLTIGDPVLS (203 aa)). Residues 2-211 (GNNIKVTFDP…VLSTEMSPSG (210 aa)) are Virion surface; in external conformation-facing. Topologically, residues 2–283 (GNNIKVTFDP…NGFRWMYLRR (282 aa)) are intravirion; in internal conformation. N-linked (GlcNAc...) asparagine glycosylation is present at Asn3. The disordered stretch occupies residues 110–144 (RDIPRGIVPPQTPSNRDQRRKPTPLTPPLRDTHPH). The pre-S2 stretch occupies residues 146–204 (TMKNQTGHLQGFAEGLRALTTSDHHNSAYGDPFTTLSPVVPTVSTTLSPPLTIGDPVLS). The chain crosses the membrane as a helical span at residues 212–232 (LLGLLAGLQVVYFLWTKILTI). The Intravirion; in external conformation segment spans residues 233–283 (AQSLDWWWTSLSFPGGIPECTGQNLQFQTCKHLPTSCPPTCNGFRWMYLRR). The helical transmembrane segment at 284–304 (FIIYLLVLLLFLTFLLVLLDW) threads the bilayer. Topologically, residues 305-376 (KGLLPVCPMM…WALARFSWLS (72 aa)) are virion surface. N-linked (GlcNAc...) asparagine; by host glycosylation is present at Asn348. Residues 377–397 (LLVPLLQWLGGISLTVWLLLI) form a helical membrane-spanning segment. At 398–403 (WMIWFW) the chain is on the intravirion side. Residues 404–426 (GPVLMSILPPFIPIFALFFLIWA) traverse the membrane as a helical segment. Residues 427–428 (YI) are Virion surface-facing.

The protein belongs to the orthohepadnavirus major surface antigen family. In terms of assembly, in its internal form (Li-HBsAg), interacts with the capsid protein and with the isoform S. Interacts with host chaperone CANX. Associates with host chaperone CANX through its pre-S2 N glycan; this association may be essential for isoform M proper secretion. As to quaternary structure, interacts with isoform L. Interacts with the antigens of satellite virus HDV (HDVAgs); this interaction is required for encapsidation of HDV genomic RNA. Post-translationally, isoform M is N-terminally acetylated by host at a ratio of 90%, and N-glycosylated by host at the pre-S2 region. In terms of processing, myristoylated.

The protein localises to the virion membrane. The large envelope protein exists in two topological conformations, one which is termed 'external' or Le-HBsAg and the other 'internal' or Li-HBsAg. In its external conformation the protein attaches the virus to cell receptors and thereby initiating infection. This interaction determines the species specificity and liver tropism. This attachment induces virion internalization predominantly through caveolin-mediated endocytosis. The large envelope protein also assures fusion between virion membrane and endosomal membrane. In its internal conformation the protein plays a role in virion morphogenesis and mediates the contact with the nucleocapsid like a matrix protein. Its function is as follows. The middle envelope protein plays an important role in the budding of the virion. It is involved in the induction of budding in a nucleocapsid independent way. In this process the majority of envelope proteins bud to form subviral lipoprotein particles of 22 nm of diameter that do not contain a nucleocapsid. This Ground squirrel hepatitis virus (strain 27) (GSHV) protein is Large envelope protein.